A 1167-amino-acid chain; its full sequence is Outer membrane protein SlpA (1167 aa).

Residues 1-22 form the signal peptide; it reads MKKSLIALTTALSFGLAAAQTA. Topologically, residues 23 to 254 are periplasmic; sequence APVSAPQVPA…RIAALERNAF (232 aa). The region spanning 29-92 is the SLH domain; that stretch reads QVPALTDVPA…DQMRDGETPA (64 aa). A beta stranded membrane pass occupies residues 255 to 268; the sequence is SVKPSLTIGYSVSR. The Extracellular portion of the chain corresponds to 269–377; sequence TSRNFDVDRL…RNGFGFNNLA (109 aa). Cu(2+) contacts are provided by D274, D276, R305, F308, D310, and E381. A beta stranded membrane pass occupies residues 378 to 403; that stretch reads RYKEGSTDIGISLGFDTSGQFSQVTS. Residues 404–416 lie on the Periplasmic side of the membrane; it reads GTGGSLFSTAGRL. A beta stranded transmembrane segment spans residues 417 to 428; that stretch reads QVNQIDLNFGLV. The Extracellular portion of the chain corresponds to 429–471; that stretch reads TGLPSDAYVDTNGNGKKDDGEATGRGTYLGSGGTAAILRDPAG. Fe(3+)-binding residues include D438, N442, K444, D446, and E449. Residues 472-490 traverse the membrane as a beta stranded segment; that stretch reads NVYRPVFFRFKNATTQFSV. Topologically, residues 491 to 494 are periplasmic; it reads GNNP. The beta stranded transmembrane segment at 495–500 threads the bilayer; that stretch reads VIVTLG. The Extracellular segment spans residues 501-519; the sequence is QQQKFYFSDYVFDNNYDGR. Cu(2+) is bound by residues D513 and N515. The beta stranded transmembrane segment at 520–528 threads the bilayer; that stretch reads GDGFTVTVD. Over 529–540 the chain is Periplasmic; that stretch reads GSNVPVIGAWKP. The beta stranded transmembrane segment at 541-549 threads the bilayer; that stretch reads QIKGVYGSR. Positions 549, 551, 553, and 559 each coordinate Cu(2+). Residues 550-561 lie on the Extracellular side of the membrane; that stretch reads SGLDGTAEAGYG. A beta stranded membrane pass occupies residues 562–571; the sequence is VYYRGVRAQI. Topologically, residues 572-577 are periplasmic; sequence TPVGTL. The beta stranded transmembrane segment at 578-588 threads the bilayer; that stretch reads TAGIHYAQEGR. Residues 589-601 are Extracellular-facing; it reads DMFGAAQNTTSTP. The beta stranded transmembrane segment at 602–615 threads the bilayer; it reads SDVTTYGADLHGKA. The Periplasmic segment spans residues 616–617; sequence FG. Residues 618-630 traverse the membrane as a beta stranded segment; that stretch reads VELHSEYATSRVR. S622 contacts deinoxanthin. The Extracellular segment spans residues 631-638; that stretch reads PNTANAAV. The beta stranded transmembrane segment at 639 to 649 threads the bilayer; sequence QTSNAFYARVA. Topologically, residues 650 to 670 are periplasmic; it reads TRKDNLAFDLNTPAAKFGNDT. Residues 671 to 682 traverse the membrane as a beta stranded segment; that stretch reads FGVSLYDLNYRK. Residues 683–753 are Extracellular-facing; the sequence is IDAGYNNVAG…GTVVATNTKI (71 aa). G716 is a binding site for Cu(2+). Residues 754-766 traverse the membrane as a beta stranded segment; sequence GQMGFGVKAAANL. Topologically, residues 767-768 are periplasmic; it reads GP. Residues 769-779 form a beta stranded membrane-spanning segment; it reads VAIGGYYDTST. The Extracellular portion of the chain corresponds to 780–788; the sequence is GANGDNANR. A beta stranded transmembrane segment spans residues 789 to 798; the sequence is MTEAGGSAKV. At 799 to 802 the chain is on the periplasmic side; it reads AYSI. The chain crosses the membrane as a beta stranded span at residues 803-814; it reads FSLRGTYNTLDS. The Extracellular portion of the chain corresponds to 815–831; the sequence is NRPQIYRDAAGTQIIGD. A beta stranded transmembrane segment spans residues 832 to 843; it reads AKVRRYAVQADV. Residues 844–848 are Periplasmic-facing; the sequence is TPGLG. The chain crosses the membrane as a beta stranded span at residues 849–860; the sequence is LFVGAYYRDVNV. Topologically, residues 861 to 931 are extracellular; that stretch reads NGVRSTTDRG…DQSRTATCFT (71 aa). A beta stranded membrane pass occupies residues 932–940; the sequence is SYGVEAGHA. The Periplasmic portion of the chain corresponds to 941–949; that stretch reads GDNANALVK. The beta stranded transmembrane segment at 950-960 threads the bilayer; the sequence is DLFFRVGYSRV. The Extracellular portion of the chain corresponds to 961 to 976; the sequence is YVPTTATATTGDFSGS. A beta stranded membrane pass occupies residues 977–988; the sequence is VTYGDARYDRKV. The Periplasmic segment spans residues 989–990; sequence GV. Residues 991 to 1002 form a beta stranded membrane-spanning segment; it reads ANVRLAGSFSTT. Over 1003-1014 the chain is Extracellular; it reads NTQLDSRPAGTR. A beta stranded membrane pass occupies residues 1015-1023; sequence GAVGLIVRT. At 1024–1032 the chain is on the periplasmic side; it reads DPLENVPFR. The chain crosses the membrane as a beta stranded span at residues 1033–1046; sequence PQFNGQVGYYTADN. Topologically, residues 1047–1052 are extracellular; that stretch reads RVAAGN. Residues 1053–1066 form a beta stranded membrane-spanning segment; the sequence is YNANATKYGAGVVL. Residues 1067 to 1073 lie on the Periplasmic side of the membrane; it reads NDFLLPQ. The beta stranded transmembrane segment at 1074-1086 threads the bilayer; sequence TKIGVRYDGYMAQ. Over 1087-1108 the chain is Extracellular; it reads NRQYTPFDGDGTQGYFSDANNN. Residues 1109–1122 traverse the membrane as a beta stranded segment; it reads RRTNLNGVYVEGAY. Topologically, residues 1123–1124 are periplasmic; that stretch reads QD. The beta stranded transmembrane segment at 1125 to 1138 threads the bilayer; sequence LIFSYGTYTLSQKD. Residues 1139–1153 lie on the Extracellular side of the membrane; the sequence is LNGVEYGSGINNGQP. A beta stranded transmembrane segment spans residues 1154-1166; it reads ARGQTFKISYKVN. F1167 is a topological domain (periplasmic).

Homotrimer. Part of a heterooligomeric complex resulting in the main assembly named S-layer deinoxanthin-binding complex (SDBC) which is composed of six different subunits, namely SlpA, DR_2310, DR_0505, DR_A0283, DR_A0282, and DR_A0281.

It is found in the cell envelope. The protein resides in the cell outer membrane. It catalyses the reaction L-arginine(in) = L-arginine(out). It carries out the reaction L-lysine(in) = L-lysine(out). The enzyme catalyses L-glutamate(out) = L-glutamate(in). Functionally, plays an important role in the structural organization and integrity of the cell envelope, bridging the outer membrane to the peptidoglyan layer. Is a highly abundant molecule in the D.radiodurans cell envelope but is not a fundamental component of the S-layer. Binds the carotenoid deinoxanthin, a strong protective antioxidant specific of this bacterium, and could be part of the first lane of defense against UV radiation, especially under desiccation. Appears to be a nonselective channel. Is able to transport charged amino acids such as Lys, Arg and Glu; the large dimension of the pore points toward the physiological importance of the SDBC complex in assisting and allowing the exchange of substances, including nutrients, with the surrounding environment. The chain is Outer membrane protein SlpA from Deinococcus radiodurans (strain ATCC 13939 / DSM 20539 / JCM 16871 / CCUG 27074 / LMG 4051 / NBRC 15346 / NCIMB 9279 / VKM B-1422 / R1).